Consider the following 393-residue polypeptide: NAD(P)H-quinone oxidoreductase subunit H, chloroplastic (393 aa).

It belongs to the complex I 49 kDa subunit family. In terms of assembly, NDH is composed of at least 16 different subunits, 5 of which are encoded in the nucleus.

It is found in the plastid. The protein resides in the chloroplast thylakoid membrane. It carries out the reaction a plastoquinone + NADH + (n+1) H(+)(in) = a plastoquinol + NAD(+) + n H(+)(out). The enzyme catalyses a plastoquinone + NADPH + (n+1) H(+)(in) = a plastoquinol + NADP(+) + n H(+)(out). In terms of biological role, NDH shuttles electrons from NAD(P)H:plastoquinone, via FMN and iron-sulfur (Fe-S) centers, to quinones in the photosynthetic chain and possibly in a chloroplast respiratory chain. The immediate electron acceptor for the enzyme in this species is believed to be plastoquinone. Couples the redox reaction to proton translocation, and thus conserves the redox energy in a proton gradient. This is NAD(P)H-quinone oxidoreductase subunit H, chloroplastic from Eucalyptus globulus subsp. globulus (Tasmanian blue gum).